Reading from the N-terminus, the 372-residue chain is MSAHVATLHPEPPFALCGPRGTLIARGVRTRYCDVRAAQAALRSGTAPILLGALPFDVSRPAALMVPDGVLRARKLPDWPTGPLPKVRVAAALPPPADYLTRIGRARDLLAAFDGPLHKVVLARAVQLTADAPLDARVLLRRLVVADPTAYGYLVDLTSAGNDDTGAALVGASPELLVARSGNRVMCKPFAGSAPRAADPKLDAANAAALASSAKNRHEHQLVVDTMRVALEPLCEDLTIPAQPQLNRTAAVWHLCTAITGRLRNISTTAIDLALALHPTPAVGGVPTKAATELIAELEGDRGFYAGAVGWCDGRGDGHWVVSIRCAQLSADRRAALAHAGGGIVAESDPDDELEETTTKFATILTALGVEQ.

Lys119 serves as the catalytic Proton acceptor. Glu175 (proton donor) is an active-site residue. Mg(2+)-binding residues include Glu219 and Glu356.

Belongs to the isochorismate synthase family. Requires Mg(2+) as cofactor.

The enzyme catalyses chorismate = isochorismate. It functions in the pathway quinol/quinone metabolism; 1,4-dihydroxy-2-naphthoate biosynthesis; 1,4-dihydroxy-2-naphthoate from chorismate: step 1/7. Its pathway is quinol/quinone metabolism; menaquinone biosynthesis. Functionally, catalyzes the conversion of chorismate to isochorismate. The sequence is that of Putative isochorismate synthase MenF (menF) from Mycobacterium tuberculosis (strain CDC 1551 / Oshkosh).